The sequence spans 505 residues: Maturase K (505 aa).

The protein belongs to the intron maturase 2 family. MatK subfamily.

It is found in the plastid. Its subcellular location is the chloroplast. In terms of biological role, usually encoded in the trnK tRNA gene intron. Probably assists in splicing its own and other chloroplast group II introns. The sequence is that of Maturase K from Dioon edule (Virgin's palm).